We begin with the raw amino-acid sequence, 246 residues long: Complement C1q subcomponent subunit C (246 aa).

The N-terminal stretch at 1–29 is a signal peptide; that stretch reads MVVGPSCQPPCGLCLLLLFLLALPLRSQA. Residues 32 to 113 form the Collagen-like domain; sequence GCYGIPGMPG…GPPGEPGVEG (82 aa). 4-hydroxyproline occurs at positions 37, 40, 43, 46, and 64. The segment at 44–116 is disordered; the sequence is GAPGKDGHDG…GEPGVEGRYK (73 aa). A 5-hydroxylysine modification is found at Lys-76. O-linked (Gal...) hydroxylysine glycosylation is present at Lys-76. 4-hydroxyproline is present on residues Pro-82, Pro-97, Pro-100, and Pro-106. Pro residues predominate over residues 99-108; sequence DPGPRGPPGE. A C1q domain is found at 116–246; it reads KQKHQSVFTV…VFSGFLLFPD (131 aa). Cys-180 and Cys-194 form a disulfide bridge.

As to quaternary structure, core component of the complement C1 complex, a calcium-dependent complex composed of 1 molecule of the C1Q subcomplex, 2 molecules of C1R and 2 molecules of C1S. The C1Q subcomplex is composed 18 subunits: 3 chains of C1QA, C1QB, and C1QC trimerize to form 6 collagen-like triple helices connected to six globular ligand-recognition modules (C1q domain). O-linked glycans consist of Glc-Gal disaccharides bound to the oxygen atom of post-translationally added hydroxyl groups.

The protein localises to the secreted. The protein resides in the cell surface. Its activity is regulated as follows. The C1Q subcomplex is inhibited by sulfated molecules, such as triterpenoid sulfates, heparan sulfate, or chondroitin sulfates. Functionally, core component of the complement C1 complex, a multiprotein complex that initiates the classical pathway of the complement system, a cascade of proteins that leads to phagocytosis and breakdown of pathogens and signaling that strengthens the adaptive immune system. The classical complement pathway is initiated by the C1Q subcomplex of the C1 complex, which specifically binds IgG or IgM immunoglobulins complexed with antigens, forming antigen-antibody complexes on the surface of pathogens: C1QA, together with C1QB and C1QC, specifically recognizes and binds the Fc regions of IgG or IgM via its C1q domain. Immunoglobulin-binding activates the proenzyme C1R, which cleaves C1S, initiating the proteolytic cascade of the complement system. The C1Q subcomplex is activated by a hexamer of IgG complexed with antigens, while it is activated by a pentameric IgM. The C1Q subcomplex also recognizes and binds phosphatidylserine exposed on the surface of cells undergoing programmed cell death, possibly promoting activation of the complement system. This Mus musculus (Mouse) protein is Complement C1q subcomponent subunit C.